We begin with the raw amino-acid sequence, 468 residues long: ATP synthase subunit beta (468 aa).

148-155 serves as a coordination point for ATP; the sequence is GGAGVGKT.

Belongs to the ATPase alpha/beta chains family. As to quaternary structure, F-type ATPases have 2 components, CF(1) - the catalytic core - and CF(0) - the membrane proton channel. CF(1) has five subunits: alpha(3), beta(3), gamma(1), delta(1), epsilon(1). CF(0) has three main subunits: a(1), b(2) and c(9-12). The alpha and beta chains form an alternating ring which encloses part of the gamma chain. CF(1) is attached to CF(0) by a central stalk formed by the gamma and epsilon chains, while a peripheral stalk is formed by the delta and b chains.

Its subcellular location is the cell inner membrane. It carries out the reaction ATP + H2O + 4 H(+)(in) = ADP + phosphate + 5 H(+)(out). Its function is as follows. Produces ATP from ADP in the presence of a proton gradient across the membrane. The catalytic sites are hosted primarily by the beta subunits. This Xanthomonas axonopodis pv. citri (strain 306) protein is ATP synthase subunit beta.